We begin with the raw amino-acid sequence, 174 residues long: MKISVIPEQVAETLDAENHFIVREVFDVHLSDQGFELSTRSVSPYRKDYISDDDSDEDSACYGAFIDQELVGKIELNSTWNDLASIEHIVVSHTHRGKGVAHSLIEFAKKWALSRQLLGIRLETQTNNVPACNLYAKCGFTLGGIDLFTYKTRPQVSNETAMYWYWFSGAQDDA.

The 151-residue stretch at 20–170 (FIVREVFDVH…AMYWYWFSGA (151 aa)) folds into the N-acetyltransferase domain.

The protein belongs to the acetyltransferase family. GNAT subfamily.

The enzyme catalyses streptothricin F + acetyl-CoA = N(beta)-acetylstreptothricin F + CoA + H(+). Its function is as follows. Involved in resistance to streptothricin, a broad-spectrum antibiotic produced by streptomycetes. Detoxifies streptothricin via acetylation of the beta amino group of the first beta-lysyl moiety of streptothricin. The polypeptide is Streptothricin acetyltransferase (sat-1) (Escherichia coli).